Here is a 1918-residue protein sequence, read N- to C-terminus: NFX1-type zinc finger-containing protein 1 (1918 aa).

A compositionally biased stretch (basic and acidic residues) spans 1–12 (MEERRPHLDARP). Disordered stretches follow at residues 1 to 58 (MEER…RANN) and 75 to 140 (RNPH…QPQQ). Low complexity predominate over residues 30 to 42 (RARNQANNPPANA). The segment covering 82 to 105 (RNQEGHASDEARDQRHDQENDTRW) has biased composition (basic and acidic residues). Polar residues predominate over residues 120–129 (SNDNFQQWRT). Residues 286-313 (DIEEETEKNLEKVQTIIEHLQEKRREGT) are a coiled coil. 2 disordered regions span residues 796 to 819 (SVSPAGPENTAQAEGDEEEEGEEE) and 876 to 896 (TAAGQEQATGEWQTQRNQKKK). The segment covering 809–819 (EGDEEEEGEEE) has biased composition (acidic residues). The segment covering 877–887 (AAGQEQATGEW) has biased composition (polar residues). The stretch at 886–967 (EWQTQRNQKK…TSAERMAELR (82 aa)) forms a coiled coil. NF-X1-type zinc fingers lie at residues 1298–1320 (CGHVCTRACHPYDSSHKEFQCMK), 1330–1346 (GHRCPLVCFQECQPCQV), 1382–1400 (CGHRCSHPCGEDCVQLCSE), 1441–1463 (CGHPCPGSCHSCFEGRFHERCQQ), 1471–1488 (CSHKCQEPCIGECPPCQR), and 1546–1564 (CGHPCIGLCGEPCPKKCRI). Residues 1741-1820 (LAKKRLSFTS…EKMEALKATL (80 aa)) are a coiled coil. The RZ-type zinc-finger motif lies at 1827 to 1898 (ISEEERVQIV…LASEMDGAQH (72 aa)). Residues C1849, H1853, C1869, and C1872 each contribute to the Zn(2+) site.

The protein belongs to the ZNFX1 family. In terms of assembly, interacts with MAVS. In terms of tissue distribution, widely expressed.

Its subcellular location is the mitochondrion outer membrane. It is found in the cytoplasm. It localises to the stress granule. Its function is as follows. RNA-binding protein that initiates the antiviral response and is required to restrict the replication of RNA viruses. Acts as a double-stranded RNA (dsRNA) sensor that recognizes viral RNA and then interacts with MAVS to initiate the type I interferon response. Also required for immunity against some bacteria, such as mycobacteria. The chain is NFX1-type zinc finger-containing protein 1 from Homo sapiens (Human).